Consider the following 416-residue polypeptide: PRKCA-binding protein (416 aa).

The 84-residue stretch at 22–105 folds into the PDZ domain; the sequence is KVTLQKDAQN…EVTIHYNKLQ (84 aa). Residues Cys44 and Cys46 each coordinate Zn(2+). Phosphothreonine is present on Thr82. The AH domain occupies 144–357; the sequence is LCNDGLVKRL…CYAVLQDADV (214 aa). Positions 373–416 are disordered; it reads PNQGSFTDGEEEDEEEEDGAAREVSKDACGATGPTDKGGSWCDS. Positions 380 to 390 are enriched in acidic residues; sequence DGEEEDEEEED. Cys414 carries the S-palmitoyl cysteine; by DHHC8 lipid modification.

As to quaternary structure, monomer and homodimer. Interacts with CXADR. Interacts presynaptically with the glutamate receptors GRIA2, GRIA3, GRIK3, isoform 3 of GRIA4, isoform A of GRM4, GRM7 and GRM8; with NAPA and NAPB; and with BTG2. The interaction with NAPA and NAPB disrupts the interaction with GRIA2, conducting to the internalization of GRIA2. Interacts with PRKCA; with the amine transporters SLC6A2 and SLC6A3; with the channels ASIC1 and ASIC2; with the GTP-binding proteins ARF1 and ARF3; with the ephrin receptor tyrosine kinases EPHA7, EPHB1 and EPHB2; with ERBB2 and through its PDZ domain with the C-terminal tail of PRLHR. Interacts with UNC5A. Interacts (via AH domain) with NCS1/FREQ; in a calcium-dependent manner. Interacts with F-actin and associates with the ARP2/3 complex. Interacts (via PDZ domain) with ARF1 (activated); the interaction blocks Arp2/3 complex inhibition. Interacts with SORCS3. Phosphorylation at Thr-82 appears to inhibit the interaction with AMPA receptors. Phosphorylated on tyrosine residues by EPHB2 and on serine or threonine residues by PKC. Post-translationally, palmitoylation on Cys-414 is essential for long-term synaptic depression (LTD). As to expression, expressed in all tissues examined, with highest levels in brain and testes and lowest levels in lung.

The protein localises to the cytoplasm. Its subcellular location is the perinuclear region. It localises to the membrane. The protein resides in the postsynaptic density. It is found in the synapse. The protein localises to the synaptosome. Its subcellular location is the cytoskeleton. In terms of biological role, probable adapter protein that bind to and organize the subcellular localization of a variety of membrane proteins containing some PDZ recognition sequence. Involved in the clustering of various receptors, possibly by acting at the receptor internalization level. Plays a role in synaptic plasticity by regulating the trafficking and internalization of AMPA receptors. May be regulated upon PRKCA activation. May regulate ASIC1/ASIC3 channel. Regulates actin polymerization by inhibiting the actin-nucleating activity of the Arp2/3 complex; the function is competitive with nucleation promoting factors and is linked to neuronal morphology regulation and AMPA receptor (AMPAR) endocytosis. Via interaction with the Arp2/3 complex involved in regulation of synaptic plasicity of excitatory synapses and required for spine shrinkage during long-term depression (LTD). Involved in regulation of astrocyte morphology, antagonistic to Arp2/3 complex activator WASL/N-WASP function. The polypeptide is PRKCA-binding protein (Pick1) (Mus musculus (Mouse)).